Here is a 311-residue protein sequence, read N- to C-terminus: Tricarboxylate transport protein, mitochondrial (311 aa).

Residues methionine 1–alanine 13 constitute a propeptide, removed in mature form. Over residues methionine 1–proline 15 the composition is skewed to low complexity. Residues methionine 1–leucine 22 form a disordered region. Solcar repeat units lie at residues threonine 23–histidine 111, threonine 122–tryptophan 208, and methionine 218–leucine 303. The next 3 helical transmembrane spans lie at isoleucine 29–threonine 46, glycine 86–phenylalanine 105, and leucine 129–methionine 143. Serine 156 carries the phosphoserine modification. 3 helical membrane passes run glycine 183–methionine 202, glycine 224–leucine 241, and glycine 278–tyrosine 297.

It belongs to the mitochondrial carrier (TC 2.A.29) family. Possesses a short cleavable presequence, which, however, is found to be dispensable both for targeting to mitochondria and insertion into the inner membrane. However, the presequence is required to keep SLC25A1 in a soluble state and thus in an import-competent state. Mature SLC25A1 lacking the presequence is prone to aggregation.

It localises to the mitochondrion inner membrane. It is found in the mitochondrion membrane. It carries out the reaction (S)-malate(in) + citrate(out) = (S)-malate(out) + citrate(in). It catalyses the reaction D-threo-isocitrate(in) + citrate(out) = D-threo-isocitrate(out) + citrate(in). The catalysed reaction is citrate(out) + succinate(in) = citrate(in) + succinate(out). The enzyme catalyses phosphoenolpyruvate(in) + citrate(out) = phosphoenolpyruvate(out) + citrate(in). It carries out the reaction cis-aconitate(in) + citrate(out) = cis-aconitate(out) + citrate(in). It catalyses the reaction trans-aconitate(in) + citrate(out) = trans-aconitate(out) + citrate(in). The catalysed reaction is maleate(in) + citrate(out) = maleate(out) + citrate(in). Its function is as follows. Mitochondrial electroneutral antiporter that exports citrate from the mitochondria into the cytosol in exchange for malate. Also able to mediate the exchange of citrate for isocitrate, phosphoenolpyruvate, cis-aconitate and to a lesser extent trans-aconitate, maleate and succinate. In the cytoplasm, citrate plays important roles in fatty acid and sterol synthesis, regulation of glycolysis, protein acetylation, and other physiopathological processes. The sequence is that of Tricarboxylate transport protein, mitochondrial (SLC25A1) from Bos taurus (Bovine).